The following is a 298-amino-acid chain: Lipoyl synthase (298 aa).

[4Fe-4S] cluster is bound by residues Cys40, Cys45, Cys51, Cys67, Cys71, Cys74, and Ser280. One can recognise a Radical SAM core domain in the interval 53 to 269 (AVRRTATFMI…KEIAMQKGFS (217 aa)).

Belongs to the radical SAM superfamily. Lipoyl synthase family. The cofactor is [4Fe-4S] cluster.

It localises to the cytoplasm. It catalyses the reaction [[Fe-S] cluster scaffold protein carrying a second [4Fe-4S](2+) cluster] + N(6)-octanoyl-L-lysyl-[protein] + 2 oxidized [2Fe-2S]-[ferredoxin] + 2 S-adenosyl-L-methionine + 4 H(+) = [[Fe-S] cluster scaffold protein] + N(6)-[(R)-dihydrolipoyl]-L-lysyl-[protein] + 4 Fe(3+) + 2 hydrogen sulfide + 2 5'-deoxyadenosine + 2 L-methionine + 2 reduced [2Fe-2S]-[ferredoxin]. It participates in protein modification; protein lipoylation via endogenous pathway; protein N(6)-(lipoyl)lysine from octanoyl-[acyl-carrier-protein]. Functionally, catalyzes the radical-mediated insertion of two sulfur atoms into the C-6 and C-8 positions of the octanoyl moiety bound to the lipoyl domains of lipoate-dependent enzymes, thereby converting the octanoylated domains into lipoylated derivatives. The chain is Lipoyl synthase from Bacillus velezensis (strain DSM 23117 / BGSC 10A6 / LMG 26770 / FZB42) (Bacillus amyloliquefaciens subsp. plantarum).